Reading from the N-terminus, the 92-residue chain is Small ribosomal subunit protein uS19 (92 aa).

The protein belongs to the universal ribosomal protein uS19 family.

Protein S19 forms a complex with S13 that binds strongly to the 16S ribosomal RNA. This chain is Small ribosomal subunit protein uS19, found in Streptococcus pyogenes serotype M49 (strain NZ131).